The chain runs to 131 residues: Small ribosomal subunit protein uS8 (131 aa).

Belongs to the universal ribosomal protein uS8 family. Part of the 30S ribosomal subunit. Contacts proteins S5 and S12.

One of the primary rRNA binding proteins, it binds directly to 16S rRNA central domain where it helps coordinate assembly of the platform of the 30S subunit. This chain is Small ribosomal subunit protein uS8, found in Parabacteroides distasonis (strain ATCC 8503 / DSM 20701 / CIP 104284 / JCM 5825 / NCTC 11152).